Reading from the N-terminus, the 278-residue chain is Non-heme chloroperoxidase (278 aa).

The region spanning Pro26–His264 is the AB hydrolase-1 domain. Residues Ser99, Asp229, and His258 contribute to the active site.

Belongs to the AB hydrolase superfamily. Bacterial non-heme haloperoxidase / perhydrolase family. Homodimer.

The polypeptide is Non-heme chloroperoxidase (cpo) (Kitasatospora aureofaciens (Streptomyces aureofaciens)).